A 359-amino-acid chain; its full sequence is 5-formaminoimidazole-4-carboxamide-1-(beta)-D-ribofuranosyl 5'-monophosphate synthetase (359 aa).

5-amino-1-(5-phospho-beta-D-ribosyl)imidazole-4-carboxamide-binding residues include histidine 28 and serine 95. Residues 115-346 form the ATP-grasp domain; sequence ELMIWETDRD…MGRRIAREIK (232 aa). Residues 144-206 and glutamate 228 contribute to the ATP site; that span reads PEEI…ANIY. Position 256 (asparagine 256) interacts with 5-amino-1-(5-phospho-beta-D-ribosyl)imidazole-4-carboxamide. Mg(2+) is bound by residues glutamate 295 and glutamate 308.

It belongs to the phosphohexose mutase family. The cofactor is Mg(2+). Mn(2+) is required as a cofactor.

It catalyses the reaction 5-amino-1-(5-phospho-beta-D-ribosyl)imidazole-4-carboxamide + formate + ATP = 5-formamido-1-(5-phospho-D-ribosyl)imidazole-4-carboxamide + ADP + phosphate. The protein operates within purine metabolism; IMP biosynthesis via de novo pathway; 5-formamido-1-(5-phospho-D-ribosyl)imidazole-4-carboxamide from 5-amino-1-(5-phospho-D-ribosyl)imidazole-4-carboxamide (formate route): step 1/1. Its function is as follows. Catalyzes the ATP- and formate-dependent formylation of 5-aminoimidazole-4-carboxamide-1-beta-d-ribofuranosyl 5'-monophosphate (AICAR) to 5-formaminoimidazole-4-carboxamide-1-beta-d-ribofuranosyl 5'-monophosphate (FAICAR) in the absence of folates. This chain is 5-formaminoimidazole-4-carboxamide-1-(beta)-D-ribofuranosyl 5'-monophosphate synthetase, found in Archaeoglobus fulgidus (strain ATCC 49558 / DSM 4304 / JCM 9628 / NBRC 100126 / VC-16).